A 235-amino-acid polypeptide reads, in one-letter code: Exosome complex component RRP46 (235 aa).

A compositionally biased stretch (basic and acidic residues) spans 1–13 (MEEETHTDAKIRA). Residues 1–24 (MEEETHTDAKIRAENGTGSSPRGP) are disordered. Phosphoserine is present on Ser-20.

It belongs to the RNase PH family. As to quaternary structure, homodimer. Component of the RNA exosome core complex (Exo-9), composed of EXOSC1, EXOSC2, EXOSC3, EXOSC4, EXOSC5, EXOSC6, EXOSC7, EXOSC8 and EXOSC9; within the complex interacts with EXOSC3, EXOSC8, and EXOSC9. The catalytically inactive RNA exosome core complex (Exo-9) associates with the catalytic subunit EXOSC10/RRP6. Exo-9 may associate with DIS3 to form the nucleolar exosome complex, or DIS3L to form the cytoplasmic exosome complex. Exo-9 is formed by a hexameric base ring consisting of the heterodimers EXOSC4-EXOSC9, EXOSC5-EXOSC8 and EXOSC6-EXOSC7, and a cap ring consisting of EXOSC1, EXOSC2 and EXOSC3. The RNA exosome complex associates with cofactors C1D/RRP47, MPHOSPH6/MPP6 and MTREX/MTR4. Interacts with GTPBP1. Interacts with ZC3HAV1. Interacts with DDX17 only in the presence of ZC3HAV1 in an RNA-independent manner. Highly expressed in a variety of hematopoietic and epithelial tumor cell lines, but not in normal hematopoietic tissues or other normal tissue, with the exception of testis.

It is found in the nucleus. Its subcellular location is the nucleolus. It localises to the cytoplasm. In terms of biological role, non-catalytic component of the RNA exosome complex which has 3'-&gt;5' exoribonuclease activity and participates in a multitude of cellular RNA processing and degradation events. In the nucleus, the RNA exosome complex is involved in proper maturation of stable RNA species such as rRNA, snRNA and snoRNA, in the elimination of RNA processing by-products and non-coding 'pervasive' transcripts, such as antisense RNA species and promoter-upstream transcripts (PROMPTs), and of mRNAs with processing defects, thereby limiting or excluding their export to the cytoplasm. The RNA exosome may be involved in Ig class switch recombination (CSR) and/or Ig variable region somatic hypermutation (SHM) by targeting AICDA deamination activity to transcribed dsDNA substrates. In the cytoplasm, the RNA exosome complex is involved in general mRNA turnover and specifically degrades inherently unstable mRNAs containing AU-rich elements (AREs) within their 3' untranslated regions, and in RNA surveillance pathways, preventing translation of aberrant mRNAs. It seems to be involved in degradation of histone mRNA. The catalytic inactive RNA exosome core complex of 9 subunits (Exo-9) is proposed to play a pivotal role in the binding and presentation of RNA for ribonucleolysis, and to serve as a scaffold for the association with catalytic subunits and accessory proteins or complexes. In vitro, EXOSC5 does not bind or digest single-stranded RNA and binds to double-stranded DNA without detectable DNase activity. The protein is Exosome complex component RRP46 (EXOSC5) of Homo sapiens (Human).